Consider the following 252-residue polypeptide: Chitooligosaccharide deacetylase (252 aa).

Positions 61 and 125 each coordinate Mg(2+).

This sequence belongs to the YdjC deacetylase family. ChbG subfamily. Homodimer. Requires Mg(2+) as cofactor.

The protein localises to the cytoplasm. The enzyme catalyses N,N'-diacetylchitobiose + H2O = N-acetyl-beta-D-glucosaminyl-(1-&gt;4)-D-glucosamine + acetate. The catalysed reaction is diacetylchitobiose-6'-phosphate + H2O = N'-monoacetylchitobiose-6'-phosphate + acetate. The protein operates within glycan degradation; chitin degradation. In terms of biological role, involved in the degradation of chitin. ChbG is essential for growth on the acetylated chitooligosaccharides chitobiose and chitotriose but is dispensable for growth on cellobiose and chitosan dimer, the deacetylated form of chitobiose. Deacetylation of chitobiose-6-P and chitotriose-6-P is necessary for both the activation of the chb promoter by the regulatory protein ChbR and the hydrolysis of phosphorylated beta-glucosides by the phospho-beta-glucosidase ChbF. Catalyzes the removal of only one acetyl group from chitobiose-6-P to yield monoacetylchitobiose-6-P, the inducer of ChbR and the substrate of ChbF. This Salmonella heidelberg (strain SL476) protein is Chitooligosaccharide deacetylase.